The sequence spans 627 residues: DNA-directed RNA polymerase subunit gamma (627 aa).

Cys-70, Cys-72, Cys-85, and Cys-88 together coordinate Zn(2+). Residues Asp-468, Asp-470, and Asp-472 each coordinate Mg(2+).

The protein belongs to the RNA polymerase beta' chain family. RpoC1 subfamily. As to quaternary structure, in cyanobacteria the RNAP catalytic core is composed of 2 alpha, 1 beta, 1 beta', 1 gamma and 1 omega subunit. When a sigma factor is associated with the core the holoenzyme is formed, which can initiate transcription. The cofactor is Mg(2+). It depends on Zn(2+) as a cofactor.

It carries out the reaction RNA(n) + a ribonucleoside 5'-triphosphate = RNA(n+1) + diphosphate. In terms of biological role, DNA-dependent RNA polymerase catalyzes the transcription of DNA into RNA using the four ribonucleoside triphosphates as substrates. This chain is DNA-directed RNA polymerase subunit gamma, found in Synechococcus sp. (strain JA-2-3B'a(2-13)) (Cyanobacteria bacterium Yellowstone B-Prime).